Here is a 103-residue protein sequence, read N- to C-terminus: Flagellar hook-basal body complex protein FliE (103 aa).

Belongs to the FliE family.

Its subcellular location is the bacterial flagellum basal body. The polypeptide is Flagellar hook-basal body complex protein FliE (Helicobacter hepaticus (strain ATCC 51449 / 3B1)).